Reading from the N-terminus, the 209-residue chain is Uracil phosphoribosyltransferase (209 aa).

Residues arginine 79, arginine 104, and 131 to 139 (DPMLATGGS) contribute to the 5-phospho-alpha-D-ribose 1-diphosphate site. Residues valine 194 and 199-201 (GDA) each bind uracil. Aspartate 200 contacts 5-phospho-alpha-D-ribose 1-diphosphate.

This sequence belongs to the UPRTase family. Mg(2+) serves as cofactor.

It carries out the reaction UMP + diphosphate = 5-phospho-alpha-D-ribose 1-diphosphate + uracil. Its pathway is pyrimidine metabolism; UMP biosynthesis via salvage pathway; UMP from uracil: step 1/1. Allosterically activated by GTP. Functionally, catalyzes the conversion of uracil and 5-phospho-alpha-D-ribose 1-diphosphate (PRPP) to UMP and diphosphate. This is Uracil phosphoribosyltransferase from Bacillus cytotoxicus (strain DSM 22905 / CIP 110041 / 391-98 / NVH 391-98).